A 444-amino-acid polypeptide reads, in one-letter code: Deoxyguanosinetriphosphate triphosphohydrolase-like protein (444 aa).

In terms of domain architecture, HD spans 59-250 (RLTHSLEVSQ…MELADDIAYA (192 aa)).

It belongs to the dGTPase family. Type 2 subfamily.

This is Deoxyguanosinetriphosphate triphosphohydrolase-like protein from Shewanella halifaxensis (strain HAW-EB4).